We begin with the raw amino-acid sequence, 1057 residues long: MPKRNDIKTILVIGSGPIIIGQAAEFDYAGTQACLALKEEGYRVILVNSNPATIMTDKEIADKVYIEPLTHDFIARIIRKEQPDALLPTLGGQTGLNMAIQLHESGVLQDNNVQLLGTELTSIQQAEDREMFRTLMNDLNVPVPESDIVNTVEQAFKFKEQVGYPLIVRPAFTMGGTGGGICHNDEELHEIVSNGLHYSPATQCLLEKSIAGFKEIEYEVMRDKNDNAIVVCNMENIDPVGIHTGDSIVVAPSQTLSDVEYQMLRDVSLKVIRALGIEGGCNVQLALDPHSFDYYIIEVNPRVSRSSALASKATGYPIAKLAAKIAVGLTLDEMLNPITGTSYAAFEPTLDYVISKIPRFPFDKFEKGERELGTQMKATGEVMAIGRTYEESLLKAIRSLEYGVHHLGLPNGESFDLDYIKERISHQDDERLFFIGEAIRRGTTLEEIHNMTQIDYFFLHKFQNIIDIEHQLKEHQGDLEYLKYAKDYGFSDKTIAHRFNMTEEEVYQLRMENDIKPVYKMVDTCAAEFESSTPYYYGTYETENESIVTDKEKILVLGSGPIRIGQGVEFDYATVHAVWAIQKAGYEAIIVNNNPETVSTDFSISDKLYFEPLTEEDVMNIINLEKPKGVVVQFGGQTAINLADKLAKHGVKILGTSLENLNRAEDRKEFEALLRKINVPQPQGKSATSPEEALANAAEIGYPVVVRPSYVLGGRAMEIVDNDKELENYMTQAVKASPEHPVLVDRYLTGKEIEVDAICDGETVIIPGIMEHIERAGVHSGDSIAVYPPQTLTEDELATLEDYTIKLAKGLNIIGLINIQFVIAHDGVYVLEVNPRSSRTVPFLSKITDIPMAQLAMRAIIGEKLTDMGYQEGVQPYAEGVFVKAPVFSFNKLKNVDITLGPEMKSTGEVMGKDTTLEKALFKGLTGSGVEVKDHGTVLMTVSDKDKEEVVKLAQRLNEVGYKILATSGTANKLAEYDIPAEVVGKIGGENDLLTRIQNGDVQIVINTMTKGKEVERDGFQIRRTTVENGIPCLTSLDTANALTNVIESMTFTMRQM.

The tract at residues 1–401 is carboxyphosphate synthetic domain; it reads MPKRNDIKTI…SLLKAIRSLE (401 aa). Residues Arg-129, Arg-169, Gly-175, Gly-176, Lys-208, Ile-210, Glu-215, Gly-241, Ile-242, His-243, Gln-284, and Glu-298 each coordinate ATP. Residues 133–327 enclose the ATP-grasp 1 domain; it reads RTLMNDLNVP…IAKLAAKIAV (195 aa). Mg(2+)-binding residues include Gln-284, Glu-298, and Asn-300. Mn(2+) contacts are provided by Gln-284, Glu-298, and Asn-300. The interval 402-546 is oligomerization domain; that stretch reads YGVHHLGLPN…YGTYETENES (145 aa). A carbamoyl phosphate synthetic domain region spans residues 547–929; it reads IVTDKEKILV…ALFKGLTGSG (383 aa). Positions 671–861 constitute an ATP-grasp 2 domain; that stretch reads EALLRKINVP…MAQLAMRAII (191 aa). Residues Arg-707, Arg-746, Leu-748, Glu-752, Gly-777, Val-778, His-779, Ser-780, Gln-820, and Glu-832 each contribute to the ATP site. Mg(2+) is bound by residues Gln-820, Glu-832, and Asn-834. Positions 820, 832, and 834 each coordinate Mn(2+). Residues 930–1057 enclose the MGS-like domain; that stretch reads VEVKDHGTVL…ESMTFTMRQM (128 aa). Residues 930 to 1057 are allosteric domain; sequence VEVKDHGTVL…ESMTFTMRQM (128 aa).

The protein belongs to the CarB family. As to quaternary structure, composed of two chains; the small (or glutamine) chain promotes the hydrolysis of glutamine to ammonia, which is used by the large (or ammonia) chain to synthesize carbamoyl phosphate. Tetramer of heterodimers (alpha,beta)4. Requires Mg(2+) as cofactor. It depends on Mn(2+) as a cofactor.

The enzyme catalyses hydrogencarbonate + L-glutamine + 2 ATP + H2O = carbamoyl phosphate + L-glutamate + 2 ADP + phosphate + 2 H(+). It carries out the reaction hydrogencarbonate + NH4(+) + 2 ATP = carbamoyl phosphate + 2 ADP + phosphate + 2 H(+). It participates in amino-acid biosynthesis; L-arginine biosynthesis; carbamoyl phosphate from bicarbonate: step 1/1. Its pathway is pyrimidine metabolism; UMP biosynthesis via de novo pathway; (S)-dihydroorotate from bicarbonate: step 1/3. In terms of biological role, large subunit of the glutamine-dependent carbamoyl phosphate synthetase (CPSase). CPSase catalyzes the formation of carbamoyl phosphate from the ammonia moiety of glutamine, carbonate, and phosphate donated by ATP, constituting the first step of 2 biosynthetic pathways, one leading to arginine and/or urea and the other to pyrimidine nucleotides. The large subunit (synthetase) binds the substrates ammonia (free or transferred from glutamine from the small subunit), hydrogencarbonate and ATP and carries out an ATP-coupled ligase reaction, activating hydrogencarbonate by forming carboxy phosphate which reacts with ammonia to form carbamoyl phosphate. This chain is Carbamoyl phosphate synthase large chain, found in Staphylococcus aureus (strain Mu3 / ATCC 700698).